The following is a 259-amino-acid chain: DNA utilization protein HofM (259 aa).

In terms of biological role, required for the use of extracellular DNA as a nutrient. In Escherichia coli (strain K12), this protein is DNA utilization protein HofM (hofM).